The sequence spans 517 residues: Shugoshin 1 (517 aa).

A coiled-coil region spans residues 1 to 89 (MAKERCQKRS…DVILQLRKEC (89 aa)). The tract at residues 1-176 (MAKERCQKRS…DFDSGKVEST (176 aa)) is necessary for interaction with PPP2CA and PPP2R1A. Disordered stretches follow at residues 107–136 (QSEETTQNWKGRPSDVVSSIDNTTRDLSGK), 149–173 (PYQTTEPSPAVTPETQGCDFDSGKV), 267–317 (PEQI…TLDG), and 334–427 (HPTP…QESP). Residues 268 to 291 (EQIESKHKRARKRRAEQRRTKQRC) are a coiled coil. Residues 273-302 (KHKRARKRRAEQRRTKQRCKSKSSLRSKGN) show a composition bias toward basic residues. Polar residues predominate over residues 341 to 363 (KMNNGCNKETDSSNSEVSDLECS). Positions 379-390 (RLRDYRESERAV) are enriched in basic and acidic residues. Residue S426 is modified to Phosphoserine. The short motif at 441 to 445 (PRVKI) is the PXVXL/I motif element. The D-box motif lies at 447-455 (KPSLPPKRR). The residue at position 497 (S497) is a Phosphoserine; by NEK2.

This sequence belongs to the shugoshin family. As to quaternary structure, interacts with PPP2CA (or PPP2CB), PPP2R1B, PPP2R5A, PPP2R5B, PPP2R5C, PPP2R5D, PPP2R5E, SET, LRRC59, RBM10 (or RBM5), RPL10A, RPL28, RPL7, RPL7A and RPLP1. Interaction with protein phosphatase 2A occurs most probably through direct binding to the regulatory B56 subunits: PPP2R1B, PPP2R5A, PPP2R5B, PPP2R5C, PPP2R5D, PPP2R5E. Interacts with PPP2R1A and NEK2. Interacts with CDCA8. Post-translationally, ubiquitinated and degraded during mitotic exit by APC/C-Cdh1. In terms of processing, phosphorylation by NEK2 is essential for chromosome congression in mitosis and for the proper attachment of spindle microtubule to the kinetochore. Phosphorylated by PLK1 and AUKRB. In terms of tissue distribution, ubiquitously expressed in proliferating cells. Moderately expressed in the oocytes.

It is found in the nucleus. The protein resides in the chromosome. Its subcellular location is the centromere. It localises to the kinetochore. The protein localises to the cytoplasm. It is found in the cytoskeleton. The protein resides in the spindle pole. Its subcellular location is the microtubule organizing center. It localises to the centrosome. The protein localises to the nucleus speckle. Its function is as follows. Plays a central role in chromosome cohesion during mitosis by preventing premature dissociation of cohesin complex from centromeres after prophase, when most of cohesin complex dissociates from chromosomes arms. May act by preventing phosphorylation of the STAG2 subunit of cohesin complex at the centromere, ensuring cohesin persistence at centromere until cohesin cleavage by ESPL1/separase at anaphase. Essential for proper chromosome segregation during mitosis and this function requires interaction with PPP2R1A. Its phosphorylated form is necessary for chromosome congression and for the proper attachment of spindle microtubule to the kinetochore. Necessary for kinetochore localization of PLK1 and CENPF. May play a role in the tension sensing mechanism of the spindle-assembly checkpoint by regulating PLK1 kinetochore affinity. Involved in centromeric enrichment of AUKRB in prometaphase. The polypeptide is Shugoshin 1 (Mus musculus (Mouse)).